Consider the following 653-residue polypeptide: Transcription factor Ken 1 (653 aa).

The 69-residue stretch at 35 to 103 (TDLLLICDGK…LYSGQVYVRS (69 aa)) folds into the BTB domain. Disordered regions lie at residues 126–215 (NSDG…DRDR), 234–305 (NNHP…SDDA), 429–451 (LSNN…PPSA), and 512–534 (ELSA…GSGS). Residues 145-157 (NRNTEGITGSSVV) are compositionally biased toward polar residues. Positions 251–272 (GHHHHHHHHHHHRQLHQIKTRS) are enriched in basic residues. The span at 286 to 299 (SDPVNLSIVKQQQD) shows a compositional bias: polar residues. The segment covering 430–444 (SNNNNSSSNNNNNNN) has biased composition (low complexity). Positions 520-534 (AGGGGGGSGGNGSGS) are enriched in gly residues. 3 consecutive C2H2-type zinc fingers follow at residues 555–577 (YRCE…LRVH), 583–606 (FACR…CSVH), and 619–641 (YTCC…LSGH).

The protein resides in the nucleus. Transcription factor required for terminalia development. Negative regulator of the JAK/STAT pathway: represses JAK/STAT-dependent expression of ventral veins lacking (vvl) in the posterior spiracles. The sequence is that of Transcription factor Ken 1 from Culex quinquefasciatus (Southern house mosquito).